The chain runs to 589 residues: Kelch-like protein 25 (589 aa).

Residues 46 to 114 (TDVTLWAGDR…AYSSRIVINE (69 aa)) enclose the BTB domain. Positions 149–250 (CLGMMVLSDA…LPSDCLKNAV (102 aa)) constitute a BACK domain. Kelch repeat units lie at residues 296 to 340 (TLLI…AIGC), 341 to 388 (KVYV…ELEN), 389 to 444 (CLYV…SAKL), 446 to 492 (LFVF…VLGS), 493 to 538 (QIFI…ASGN), and 539 to 585 (KLYV…STWK).

In terms of assembly, component of the BCR(KLHL25) E3 ubiquitin ligase complex, at least composed of CUL3, KLHL25 and RBX1.

The protein operates within protein modification; protein ubiquitination. Substrate-specific adapter of a BCR (BTB-CUL3-RBX1) E3 ubiquitin ligase complex involved in various processes, such as translation homeostasis and lipid synthesis. The BCR(KLHL25) ubiquitin ligase complex acts by mediating ubiquitination of hypophosphorylated EIF4EBP1 (4E-BP1): ubiquitination and subsequent degradation of hypophosphorylated EIF4EBP1 (4E-BP1) probably serves as a homeostatic mechanism to maintain translation and prevent eIF4E inhibition when eIF4E levels are low. The BCR(KLHL25) complex does not target EIF4EBP1 (4E-BP1) when it is hyperphosphorylated or associated with eIF4E. The BCR(KLHL25) complex also acts as a regulator of lipid synthesis by mediating ubiquitination and degradation of ACLY, thereby inhibiting lipid synthesis. BCR(KLHL25)-mediated degradation of ACLY promotes fatty acid oxidation and is required for differentiation of inducible regulatory T (iTreg) cells. The chain is Kelch-like protein 25 from Mus musculus (Mouse).